A 618-amino-acid chain; its full sequence is Chaperone protein HtpG (618 aa).

Positions 1–340 are a; substrate-binding; that stretch reads MATKHQFQTE…SEDLPLNVSR (340 aa). A b region spans residues 341-545; it reads EILQQNKILA…KEDNNPMMAN (205 aa). Residues 546-618 are c; it reads LMAQMGQKVP…ELNSLLLQSL (73 aa).

Belongs to the heat shock protein 90 family. Homodimer.

It is found in the cytoplasm. Molecular chaperone. Has ATPase activity. This chain is Chaperone protein HtpG, found in Helicobacter hepaticus (strain ATCC 51449 / 3B1).